A 313-amino-acid chain; its full sequence is Protein MFI (313 aa).

Can homodimerize. Interacts with MFF; the interaction inhibits MFF interaction with DNM1L. In terms of tissue distribution, enriched in the pancreatic beta cell and the testis and is expressed at low levels in other tissues tested.

The protein localises to the cytoplasm. The protein resides in the cytosol. It localises to the mitochondrion outer membrane. Its function is as follows. Acts as an inhibitor of mitochondrial fission. Interacts with MFF and prevents DNM1L recruitment to mitochondria, promoting a more fused mitochondrial network. This is Protein MFI from Homo sapiens (Human).